A 134-amino-acid chain; its full sequence is 6,7-dimethyl-8-ribityllumazine synthase (134 aa).

Residues Phe12, Val44–Asp46, and Ser68–Ile70 each bind 5-amino-6-(D-ribitylamino)uracil. (2S)-2-hydroxy-3-oxobutyl phosphate is bound at residue Glu73–Thr74. His76 functions as the Proton donor in the catalytic mechanism. Leu101 provides a ligand contact to 5-amino-6-(D-ribitylamino)uracil. Arg116 contacts (2S)-2-hydroxy-3-oxobutyl phosphate.

The protein belongs to the DMRL synthase family.

It carries out the reaction (2S)-2-hydroxy-3-oxobutyl phosphate + 5-amino-6-(D-ribitylamino)uracil = 6,7-dimethyl-8-(1-D-ribityl)lumazine + phosphate + 2 H2O + H(+). Its pathway is cofactor biosynthesis; riboflavin biosynthesis; riboflavin from 2-hydroxy-3-oxobutyl phosphate and 5-amino-6-(D-ribitylamino)uracil: step 1/2. In terms of biological role, catalyzes the formation of 6,7-dimethyl-8-ribityllumazine by condensation of 5-amino-6-(D-ribitylamino)uracil with 3,4-dihydroxy-2-butanone 4-phosphate. This is the penultimate step in the biosynthesis of riboflavin. This is 6,7-dimethyl-8-ribityllumazine synthase from Methanosarcina acetivorans (strain ATCC 35395 / DSM 2834 / JCM 12185 / C2A).